The sequence spans 832 residues: Cadherin-like protein 26 (832 aa).

The N-terminal stretch at 1-27 is a signal peptide; it reads MAMRSGRHPSLLLLLVLLLWLLQVSII. Residues 28–614 lie on the Extracellular side of the membrane; that stretch reads DSVQQETDDL…ELADAEVGLH (587 aa). Cadherin domains lie at 35-165, 166-275, 276-396, and 397-500; these read DDLT…APQF, PEKE…RPAF, TQEN…PPAF, and HPQS…VPTL. 4 N-linked (GlcNAc...) asparagine glycosylation sites follow: Asn-81, Asn-85, Asn-171, and Asn-177. An N-linked (GlcNAc...) asparagine glycan is attached at Asn-462. A helical transmembrane segment spans residues 615–635; the sequence is VGALFPVCAAFVALAVALLFL. The Cytoplasmic portion of the chain corresponds to 636 to 832; it reads LRCYFVLEPK…EIYSESGVPS (197 aa). Positions 813–832 are disordered; the sequence is SLGSKATPFEEIYSESGVPS.

As to quaternary structure, homodimer. Component of a cadherin:catenin adhesion complex composed of at least of CDH26, beta-catenin/CTNNB1, alpha-catenin/CTNNA1 and p120 catenin/CTNND1. Post-translationally, N-glycosylated. Expressed by epithelial cells of gastrointestinal tissue.

The protein resides in the cell membrane. Its function is as follows. Cadherins are calcium-dependent cell adhesion proteins. They preferentially interact with themselves in a homophilic manner in connecting cells; cadherins may thus contribute to the sorting of heterogeneous cell types. Ligand for integrins alpha-E/beta-7, ITGAE:ITGAB7, alpha-4/beta-7, ITGA4:ITGAB7 and alpha-4/beta-1, ITGA4:ITGAB1 through which modulates CD4(+) T cells activation. The sequence is that of Cadherin-like protein 26 (CDH26) from Homo sapiens (Human).